Here is a 217-residue protein sequence, read N- to C-terminus: MKSLRWRYTRLPSQVEDALSGEEDKEEEEEKEEETTPAPTPVPEHPMVPQLAGASQVLGASEMSQLSLHLPPRVTGYSWSLAFCTSRDGFSLQSLYRQMEGHSGPVLLVLRDQDGQMFGAFSSSALRLSKGFYGTGETFLFSFSPQLKVFKWTGSNSFFVKGDLDSLMMGCGSGRFGLWLDGDLYRGGSHPCATFNNEVLARQEQFCISELEAWVLS.

The disordered stretch occupies residues 1–48; it reads MKSLRWRYTRLPSQVEDALSGEEDKEEEEEKEEETTPAPTPVPEHPMV. Residues 19–35 are compositionally biased toward acidic residues; it reads LSGEEDKEEEEEKEEET. One can recognise a TLDc domain in the interval 56-217; the sequence is QVLGASEMSQ…ISELEAWVLS (162 aa).

It belongs to the OXR1 family.

The chain is TLD domain-containing protein 2 (TLDC2) from Bos taurus (Bovine).